The following is a 335-amino-acid chain: Glyceraldehyde-3-phosphate dehydrogenase (335 aa).

NAD(+) is bound by residues 12-13 (RI), D34, and K79. D-glyceraldehyde 3-phosphate is bound by residues 150-152 (SCT), T181, 210-211 (TG), and R233. The active-site Nucleophile is the C151. Residue N315 participates in NAD(+) binding.

Belongs to the glyceraldehyde-3-phosphate dehydrogenase family. Homotetramer.

The protein localises to the cytoplasm. The enzyme catalyses D-glyceraldehyde 3-phosphate + phosphate + NAD(+) = (2R)-3-phospho-glyceroyl phosphate + NADH + H(+). The protein operates within carbohydrate degradation; glycolysis; pyruvate from D-glyceraldehyde 3-phosphate: step 1/5. The chain is Glyceraldehyde-3-phosphate dehydrogenase (GPD) from Debaryomyces hansenii (strain ATCC 36239 / CBS 767 / BCRC 21394 / JCM 1990 / NBRC 0083 / IGC 2968) (Yeast).